The primary structure comprises 222 residues: Potassium-transporting ATPase KdpC subunit (222 aa).

Residues Trp13–Thr35 traverse the membrane as a helical segment. Positions Thr136 to Ile162 are disordered.

Belongs to the KdpC family. In terms of assembly, the system is composed of three essential subunits: KdpA, KdpB and KdpC.

It localises to the cell membrane. Part of the high-affinity ATP-driven potassium transport (or Kdp) system, which catalyzes the hydrolysis of ATP coupled with the electrogenic transport of potassium into the cytoplasm. This subunit acts as a catalytic chaperone that increases the ATP-binding affinity of the ATP-hydrolyzing subunit KdpB by the formation of a transient KdpB/KdpC/ATP ternary complex. The chain is Potassium-transporting ATPase KdpC subunit from Streptomyces avermitilis (strain ATCC 31267 / DSM 46492 / JCM 5070 / NBRC 14893 / NCIMB 12804 / NRRL 8165 / MA-4680).